Reading from the N-terminus, the 254-residue chain is Small ribosomal subunit protein uS2 (254 aa).

The segment at 228–254 is disordered; sequence DRGAEKEVEAAEEAPAAEAEAAPATEE. The segment covering 240-254 has biased composition (low complexity); the sequence is EAPAAEAEAAPATEE.

Belongs to the universal ribosomal protein uS2 family.

This Flavobacterium johnsoniae (strain ATCC 17061 / DSM 2064 / JCM 8514 / BCRC 14874 / CCUG 350202 / NBRC 14942 / NCIMB 11054 / UW101) (Cytophaga johnsonae) protein is Small ribosomal subunit protein uS2.